A 360-amino-acid chain; its full sequence is Phospho-N-acetylmuramoyl-pentapeptide-transferase (360 aa).

10 helical membrane-spanning segments follow: residues 25 to 45 (RAIL…PWVI), 73 to 93 (TMGG…WADL), 97 to 117 (YVLA…VDDY), 132 to 152 (WKYF…FVTA), 168 to 188 (VAWQ…VGFS), 199 to 219 (GLAI…AYLV), 236 to 256 (SGEL…FLWF), 263 to 283 (VFMG…IAVI), 288 to 308 (IVFF…ILQV), and 339 to 359 (IVRF…TLKI).

It belongs to the glycosyltransferase 4 family. MraY subfamily. Requires Mg(2+) as cofactor.

It is found in the cell inner membrane. The catalysed reaction is UDP-N-acetyl-alpha-D-muramoyl-L-alanyl-gamma-D-glutamyl-meso-2,6-diaminopimeloyl-D-alanyl-D-alanine + di-trans,octa-cis-undecaprenyl phosphate = di-trans,octa-cis-undecaprenyl diphospho-N-acetyl-alpha-D-muramoyl-L-alanyl-D-glutamyl-meso-2,6-diaminopimeloyl-D-alanyl-D-alanine + UMP. It functions in the pathway cell wall biogenesis; peptidoglycan biosynthesis. Its function is as follows. Catalyzes the initial step of the lipid cycle reactions in the biosynthesis of the cell wall peptidoglycan: transfers peptidoglycan precursor phospho-MurNAc-pentapeptide from UDP-MurNAc-pentapeptide onto the lipid carrier undecaprenyl phosphate, yielding undecaprenyl-pyrophosphoryl-MurNAc-pentapeptide, known as lipid I. The sequence is that of Phospho-N-acetylmuramoyl-pentapeptide-transferase from Teredinibacter turnerae (strain ATCC 39867 / T7901).